The chain runs to 425 residues: Phosphoribosylamine--glycine ligase (425 aa).

The region spanning 107-312 is the ATP-grasp domain; sequence KDLCARYNIP…LLVLLNAAVD (206 aa). 133-193 serves as a coordination point for ATP; it reads VDQTGAPIVI…EEFMTGEEAS (61 aa). The disordered stretch occupies residues 214–233; the sequence is RVGDGDVGPNTGGMGAYSPA. The Mg(2+) site is built by glutamate 282 and asparagine 284.

The protein belongs to the GARS family. Mg(2+) is required as a cofactor. The cofactor is Mn(2+).

The catalysed reaction is 5-phospho-beta-D-ribosylamine + glycine + ATP = N(1)-(5-phospho-beta-D-ribosyl)glycinamide + ADP + phosphate + H(+). It participates in purine metabolism; IMP biosynthesis via de novo pathway; N(1)-(5-phospho-D-ribosyl)glycinamide from 5-phospho-alpha-D-ribose 1-diphosphate: step 2/2. The protein is Phosphoribosylamine--glycine ligase of Mesorhizobium japonicum (strain LMG 29417 / CECT 9101 / MAFF 303099) (Mesorhizobium loti (strain MAFF 303099)).